The primary structure comprises 645 residues: MSTPHLYPVPEALAANAHINNEKYHTDYARSINEPDVFWAEKAREFLTWDKPWQSVRSFDFHKGEATWFEGGKLNVTVNCIDRHLPTKANDVAIIWEGDDPSVDASITYQQLHDAVCKFANVLKARGVAKGDRVCIYMPMIPEAAYAMLACARIGAVHSIVFGGFSPEALKDRIVDSDCKVLITADEGLRGGRAVALKANADKAVAHCPQVHSVIVVKRTGADVAWNTERDIWLHEAQQSVDTVCEPESMDSEDPLFILYTSGSTGKPKGVLHTTGGYLLQAAMTHKYVFDYQPGEVYWCTADVGWVTGHTYIVYGPLTNGATTLMFEGVPTYPTAARCWEVCDKHNVNIFYTAPTAIRALMGQGDEFVASTQRKSLRILGTVGEPINPEAWEWYYNVVGDRRCPIMDTWWQTETGGHMLTPLPGAIDLKPGSATLPFFGVEPVLLDGEGNIIEGEGEGSLAIKSSWPGQIRTVYGDHDRLIQTYFSTYPGYYFTGDGARRDADGYYWITGRVDDVLNVSGHRMGTAEVESALVLHPKVAEAAVVGYPHDVKGQGIYAYVTLMTGVEPDDGLRKELVAMCTQEIGPIAKPDLIQWAPGLPKTRSGKIMRRILRKVAANELDTLGDTSTLADPSVVDDLIENRMNR.

Residues 190 to 193 and Thr-308 each bind CoA; that span reads RGGR. ATP-binding positions include 384 to 386, 408 to 413, Asp-497, and Arg-512; these read GEP and DTWWQT. Ser-520 lines the CoA pocket. Arg-523 serves as a coordination point for ATP. Residues Val-534, His-536, and Val-539 each coordinate Mg(2+). The residue at position 606 (Lys-606) is an N6-acetyllysine.

This sequence belongs to the ATP-dependent AMP-binding enzyme family. The cofactor is Mg(2+). In terms of processing, acetylated. Deacetylation by the SIR2-homolog deacetylase activates the enzyme.

The catalysed reaction is acetate + ATP + CoA = acetyl-CoA + AMP + diphosphate. Its function is as follows. Catalyzes the conversion of acetate into acetyl-CoA (AcCoA), an essential intermediate at the junction of anabolic and catabolic pathways. AcsA undergoes a two-step reaction. In the first half reaction, AcsA combines acetate with ATP to form acetyl-adenylate (AcAMP) intermediate. In the second half reaction, it can then transfer the acetyl group from AcAMP to the sulfhydryl group of CoA, forming the product AcCoA. In Saccharophagus degradans (strain 2-40 / ATCC 43961 / DSM 17024), this protein is Acetyl-coenzyme A synthetase.